Here is a 186-residue protein sequence, read N- to C-terminus: Intraflagellar transport protein 27 homolog (186 aa).

GTP is bound by residues 12-19, 64-68, and 123-126; these read GDPAVGKT, DSAGK, and TKTD.

It belongs to the small GTPase superfamily. Rab family. Component of the IFT complex B, at least composed of IFT20, IFT22, IFT25, IFT27, IFT46, IFT52, TRAF3IP1/IFT54, IFT57, IFT74, IFT80, IFT81, and IFT88. Interacts with IFT25. Interacts with IFT70B. Interacts with RABL2/RABL2A; binding is equal in the presence of GTP or GDP. Interacts with IFT88. Interacts with ARL6; recognizes and binds with the GTP-free form of ARL6. Expressed predominantly in the testis (at protein level). Co-localizes with RABL2/RABL2A in the midpiece of elongated spermatids within the testis (at protein level).

It is found in the cell projection. Its subcellular location is the cilium. The protein resides in the cytoplasm. The protein localises to the flagellum. In terms of biological role, small GTPase-like component of the intraflagellar transport (IFT) complex B that promotes the exit of the BBSome complex from cilia via its interaction with ARL6. Not involved in entry of the BBSome complex into cilium. Prevents aggregation of GTP-free ARL6. Required for hedgehog signaling. Forms a subcomplex within the IFT complex B with IFT25. Its role in intraflagellar transport is mainly seen in tissues rich in ciliated cells such as kidney and testis. Essential for male fertility, spermiogenesis and sperm flagella formation. Plays a role in the early development of the kidney. May be involved in the regulation of ureteric bud initiation. The polypeptide is Intraflagellar transport protein 27 homolog (Ift27) (Mus musculus (Mouse)).